The following is a 281-amino-acid chain: Hydroxyethylthiazole kinase (281 aa).

2 residues coordinate ATP: Arg124 and Ser169.

The protein belongs to the Thz kinase family. The cofactor is Mg(2+).

It carries out the reaction 5-(2-hydroxyethyl)-4-methylthiazole + ATP = 4-methyl-5-(2-phosphooxyethyl)-thiazole + ADP + H(+). It participates in cofactor biosynthesis; thiamine diphosphate biosynthesis; 4-methyl-5-(2-phosphoethyl)-thiazole from 5-(2-hydroxyethyl)-4-methylthiazole: step 1/1. In terms of biological role, catalyzes the phosphorylation of the hydroxyl group of 4-methyl-5-beta-hydroxyethylthiazole (THZ). The chain is Hydroxyethylthiazole kinase from Rhodococcus erythropolis (strain PR4 / NBRC 100887).